The sequence spans 214 residues: CASP-like protein UU5 (214 aa).

Residues 1–20 (MSTVAQDSAPGGGKIQDAME) form a disordered region. Residues 1 to 57 (MSTVAQDSAPGGGKIQDAMEQGAPGASSAAVVPEGGHYTQTPSPAFQAVKKNINHMS) lie on the Cytoplasmic side of the membrane. The chain crosses the membrane as a helical span at residues 58 to 78 (AFSLGLRVAEFVLSVIAFSLM). The Extracellular segment spans residues 79–99 (ASADQNGAVYSTFTSYSFVLA). The helical transmembrane segment at 100–120 (VNVLVVFYTIGQIIMSVLLLV) threads the bilayer. Residues 121-138 (SGSTPKKIYLFITFGCDQ) are Cytoplasmic-facing. A helical transmembrane segment spans residues 139–159 (LSAFLLMAAGAAGASVALIIN). Residues 160–193 (RGGVTDAYGNGCIDGKITSFCSHAQASVAFTFLS) lie on the Extracellular side of the membrane. A helical transmembrane segment spans residues 194 to 214 (FFCMVISSLLGVYSLAPYLIL).

This sequence belongs to the Casparian strip membrane proteins (CASP) family. As to quaternary structure, homodimer and heterodimers.

It is found in the cell membrane. In Physcomitrium patens (Spreading-leaved earth moss), this protein is CASP-like protein UU5.